The primary structure comprises 296 residues: uncharacterized protein (296 aa).

The next 10 helical transmembrane spans lie at 8–28, 34–54, 63–83, 89–109, 121–141, 147–167, 183–203, 208–228, 238–258, and 261–281; these read LFVL…ALAP, LAFG…AVWI, WAWP…PLFF, TGIA…AGTL, SWWI…SDSS, VAGV…TLIS, VFMI…ISWI, GLGT…FLFA, AAVT…VFFI, and MLSP…LVIS. 2 consecutive EamA domains span residues 15–138 and 158–282; these read FFWG…LLFS and ASFA…VISA.

It belongs to the EamA transporter family.

It is found in the cell membrane. This is an uncharacterized protein from Bacillus subtilis (strain 168).